We begin with the raw amino-acid sequence, 121 residues long: Large ribosomal subunit protein bL19 (121 aa).

Belongs to the bacterial ribosomal protein bL19 family.

Its function is as follows. This protein is located at the 30S-50S ribosomal subunit interface and may play a role in the structure and function of the aminoacyl-tRNA binding site. This chain is Large ribosomal subunit protein bL19, found in Neisseria meningitidis serogroup C (strain 053442).